The primary structure comprises 168 residues: Ubiquitin-fold modifier-conjugating enzyme 1 (168 aa).

Cysteine 119 (glycyl thioester intermediate) is an active-site residue.

The protein belongs to the ubiquitin-conjugating enzyme family. UFC1 subfamily.

In terms of biological role, E2-like enzyme which forms an intermediate with UFM1 via a thioester linkage. This Drosophila grimshawi (Hawaiian fruit fly) protein is Ubiquitin-fold modifier-conjugating enzyme 1.